We begin with the raw amino-acid sequence, 176 residues long: Shikimate kinase (176 aa).

Residue 17 to 24 (GMMGVGKS) participates in ATP binding.

The protein belongs to the shikimate kinase family.

It localises to the cytoplasm. The catalysed reaction is shikimate + ATP = 3-phosphoshikimate + ADP + H(+). It participates in metabolic intermediate biosynthesis; chorismate biosynthesis; chorismate from D-erythrose 4-phosphate and phosphoenolpyruvate: step 5/7. The protein is Shikimate kinase of Zymomonas mobilis subsp. mobilis (strain ATCC 31821 / ZM4 / CP4).